A 44-amino-acid chain; its full sequence is DNA-directed RNA polymerase subunit Rpo12 (44 aa).

C8, C22, and C25 together coordinate Zn(2+).

Belongs to the archaeal Rpo12/eukaryotic RPC10 RNA polymerase subunit family. Part of the RNA polymerase complex. The cofactor is Zn(2+).

It is found in the cytoplasm. It catalyses the reaction RNA(n) + a ribonucleoside 5'-triphosphate = RNA(n+1) + diphosphate. In terms of biological role, DNA-dependent RNA polymerase (RNAP) catalyzes the transcription of DNA into RNA using the four ribonucleoside triphosphates as substrates. The chain is DNA-directed RNA polymerase subunit Rpo12 from Haloquadratum walsbyi (strain DSM 16790 / HBSQ001).